The following is a 512-amino-acid chain: 2,3-bisphosphoglycerate-independent phosphoglycerate mutase (512 aa).

Mn(2+) contacts are provided by aspartate 12 and serine 62. Serine 62 (phosphoserine intermediate) is an active-site residue. Residues histidine 123, 153 to 154, arginine 185, arginine 191, 260 to 263, and lysine 333 each bind substrate; these read RD and RPDR. The Mn(2+) site is built by aspartate 400, histidine 404, aspartate 441, histidine 442, and histidine 460.

It belongs to the BPG-independent phosphoglycerate mutase family. As to quaternary structure, monomer. It depends on Mn(2+) as a cofactor.

The enzyme catalyses (2R)-2-phosphoglycerate = (2R)-3-phosphoglycerate. Its pathway is carbohydrate degradation; glycolysis; pyruvate from D-glyceraldehyde 3-phosphate: step 3/5. In terms of biological role, catalyzes the interconversion of 2-phosphoglycerate and 3-phosphoglycerate. This chain is 2,3-bisphosphoglycerate-independent phosphoglycerate mutase, found in Clostridium beijerinckii (strain ATCC 51743 / NCIMB 8052) (Clostridium acetobutylicum).